The following is a 169-amino-acid chain: Chorismate pyruvate-lyase (169 aa).

The substrate site is built by M35, R77, L115, and E156.

Belongs to the UbiC family. Monomer.

It is found in the cytoplasm. The catalysed reaction is chorismate = 4-hydroxybenzoate + pyruvate. The protein operates within cofactor biosynthesis; ubiquinone biosynthesis. Removes the pyruvyl group from chorismate, with concomitant aromatization of the ring, to provide 4-hydroxybenzoate (4HB) for the ubiquinone pathway. This is Chorismate pyruvate-lyase from Cronobacter sakazakii (strain ATCC BAA-894) (Enterobacter sakazakii).